A 251-amino-acid polypeptide reads, in one-letter code: Hydroxyacylglutathione hydrolase (251 aa).

Positions 53, 55, 57, 58, 110, 127, and 165 each coordinate Zn(2+).

This sequence belongs to the metallo-beta-lactamase superfamily. Glyoxalase II family. Monomer. The cofactor is Zn(2+).

It carries out the reaction an S-(2-hydroxyacyl)glutathione + H2O = a 2-hydroxy carboxylate + glutathione + H(+). Its pathway is secondary metabolite metabolism; methylglyoxal degradation; (R)-lactate from methylglyoxal: step 2/2. Thiolesterase that catalyzes the hydrolysis of S-D-lactoyl-glutathione to form glutathione and D-lactic acid. This chain is Hydroxyacylglutathione hydrolase, found in Pectobacterium atrosepticum (strain SCRI 1043 / ATCC BAA-672) (Erwinia carotovora subsp. atroseptica).